The following is a 1102-amino-acid chain: Protein MMS22-like (1102 aa).

The protein belongs to the MMS22 family. MMS22L subfamily.

The protein localises to the nucleus. The protein resides in the chromosome. Involved in recombination-dependent repair of stalled or collapsed replication forks. In Drosophila melanogaster (Fruit fly), this protein is Protein MMS22-like.